We begin with the raw amino-acid sequence, 92 residues long: Putative pterin-4-alpha-carbinolamine dehydratase (92 aa).

Belongs to the pterin-4-alpha-carbinolamine dehydratase family.

The catalysed reaction is (4aS,6R)-4a-hydroxy-L-erythro-5,6,7,8-tetrahydrobiopterin = (6R)-L-erythro-6,7-dihydrobiopterin + H2O. This Picosynechococcus sp. (strain ATCC 27264 / PCC 7002 / PR-6) (Agmenellum quadruplicatum) protein is Putative pterin-4-alpha-carbinolamine dehydratase.